Consider the following 457-residue polypeptide: Cysteine--tRNA ligase (457 aa).

Cys28 is a binding site for Zn(2+). The 'HIGH' region motif lies at 30 to 40 (MTVYDLCHIGH). Positions 209, 234, and 238 each coordinate Zn(2+). Positions 266 to 270 (KMSKS) match the 'KMSKS' region motif. Lys269 contributes to the ATP binding site.

It belongs to the class-I aminoacyl-tRNA synthetase family. As to quaternary structure, monomer. Zn(2+) serves as cofactor.

It localises to the cytoplasm. It catalyses the reaction tRNA(Cys) + L-cysteine + ATP = L-cysteinyl-tRNA(Cys) + AMP + diphosphate. This is Cysteine--tRNA ligase from Chromobacterium violaceum (strain ATCC 12472 / DSM 30191 / JCM 1249 / CCUG 213 / NBRC 12614 / NCIMB 9131 / NCTC 9757 / MK).